The sequence spans 337 residues: Pentalenene synthase (337 aa).

The Mg(2+) site is built by Asp80 and Asp84. The short motif at 80-84 (DDLFD) is the DDXXD motif element. Residues Cys128 and Cys136 are joined by a disulfide bond. 3 residues coordinate Mg(2+): Asn219, Ser223, and Glu227.

The protein belongs to the terpene synthase family. As to quaternary structure, monomer. Mg(2+) serves as cofactor.

It catalyses the reaction (2E,6E)-farnesyl diphosphate = pentalenene + diphosphate. It participates in sesquiterpene biosynthesis; pentalenene biosynthesis; pentalenene from farnesyl diphosphate: step 1/1. Its pathway is antibiotic biosynthesis; pentalenolactone biosynthesis. In terms of biological role, catalyzes the cyclization of farnesyl diphosphate (FPP) to the tricyclic sesquiterpene pentalenene, which is the hydrocarbon precursor of the pentalenolactone family of antibiotics produced by a variety of Streptomyces species. In Streptomyces exfoliatus (Streptomyces hydrogenans), this protein is Pentalenene synthase (penA).